A 473-amino-acid polypeptide reads, in one-letter code: H(+)/Cl(-) exchange transporter ClcA (473 aa).

The Cytoplasmic segment spans residues 1 to 32 (MKTDTPTFEAQQIVRLRRGRLIRRLVQRDKTP). Residues 33–69 (LAILLMAAVVGTLTGLVGVAFEKAVSWVQNMRIGALV) traverse the membrane as a helical segment. Topologically, residues 70-76 (QVADHAF) are periplasmic. Residues 77–100 (LLWPLAFILSALLAMVGYFLVRKF) form a helical membrane-spanning segment. The Selectivity filter part_1 signature appears at 106-110 (GSGIP). A chloride-binding site is contributed by Ser-107. Residues 109–116 (IPEIEGAL) constitute an intramembrane region (helical). Residues 117–123 (EELRPVR) lie on the Cytoplasmic side of the membrane. 2 consecutive transmembrane segments (helical) span residues 124–141 (WWRVLPVKFIGGMGTLGA) and 148–166 (EGPTVQIGGNLGRMVLDVF). The Selectivity filter part_2 signature appears at 146–150 (GREGP). Residues 167 to 176 (RMRSAEARHT) lie on the Cytoplasmic side of the membrane. 2 intramembrane regions (helical) span residues 177–189 (LLATGAAAGLSAA) and 193–201 (PLAGILFII). Residues 202–214 (EEMRPQFRYNLIS) are Cytoplasmic-facing. The helical transmembrane segment at 215-232 (IKAVFTGVIMSSIVFRIF) threads the bilayer. Topologically, residues 233–252 (NGEAPIIEVGKLSNAPVNTL) are periplasmic. A helical transmembrane segment spans residues 253 to 281 (WLYLVLGIIFGCVGPVFNTLVLRTQDMFQ). Topologically, residues 282–287 (RFHGGE) are cytoplasmic. A helical transmembrane segment spans residues 288 to 309 (IKKWVLMGGAIGGLCGILGLIE). The Periplasmic segment spans residues 310–329 (PEAAGGGFNLIPIAAAGNFS). 2 consecutive transmembrane segments (helical) span residues 330–349 (VGLLLFIFITRVVTTLLCFS) and 355–376 (GIFAPMLALGTLLGTAFGMAAA). Positions 355–359 (GIFAP) match the Selectivity filter part_3 motif. Chloride is bound by residues Ile-356 and Phe-357. Residues 377 to 386 (VLFPQYHLEA) are Periplasmic-facing. Positions 387 to 401 (GTFAIAGMGALMAAS) form an intramembrane region, helical. An intramembrane region (note=Loop between two helices) is located at residues 402–404 (VRA). The helical intramembrane region spans 405–416 (PLTGIVLVLEMT). Positions 417–421 (DNYQL) form an intramembrane region, note=Loop between two helices. The helical transmembrane segment at 422-438 (ILPMIITCLGATLLAQF) threads the bilayer. Residues 439-473 (LGGKPLYSTILARTLAKQDAEQAAKNQSTPAGENT) lie on the Cytoplasmic side of the membrane. Tyr-445 is a chloride binding site.

The protein belongs to the chloride channel (TC 2.A.49) family. ClcA subfamily. As to quaternary structure, homodimer.

It is found in the cell inner membrane. The enzyme catalyses 2 chloride(in) + H(+)(out) = 2 chloride(out) + H(+)(in). Its function is as follows. Proton-coupled chloride transporter. Functions as antiport system and exchanges two chloride ions for 1 proton. Probably acts as an electrical shunt for an outwardly-directed proton pump that is linked to amino acid decarboxylation, as part of the extreme acid resistance (XAR) response. In Salmonella arizonae (strain ATCC BAA-731 / CDC346-86 / RSK2980), this protein is H(+)/Cl(-) exchange transporter ClcA.